A 783-amino-acid polypeptide reads, in one-letter code: Endonuclease MutS2 (783 aa).

Glycine 337–threonine 344 lines the ATP pocket. One can recognise a Smr domain in the interval leucine 708–lysine 783.

It belongs to the DNA mismatch repair MutS family. MutS2 subfamily. In terms of assembly, homodimer. Binds to stalled ribosomes, contacting rRNA.

Functionally, endonuclease that is involved in the suppression of homologous recombination and thus may have a key role in the control of bacterial genetic diversity. Its function is as follows. Acts as a ribosome collision sensor, splitting the ribosome into its 2 subunits. Detects stalled/collided 70S ribosomes which it binds and splits by an ATP-hydrolysis driven conformational change. Acts upstream of the ribosome quality control system (RQC), a ribosome-associated complex that mediates the extraction of incompletely synthesized nascent chains from stalled ribosomes and their subsequent degradation. Probably generates substrates for RQC. This is Endonuclease MutS2 from Staphylococcus haemolyticus (strain JCSC1435).